The primary structure comprises 30 residues: Gamma-II crystallin (30 aa).

The 30-residue stretch at 1–30 folds into the Beta/gamma crystallin 'Greek key' domain; sequence GKITFYEDRNFQGRCYECSTDCPDLSPYFS.

Belongs to the beta/gamma-crystallin family. Monomer.

In terms of biological role, crystallins are the dominant structural components of the vertebrate eye lens. The protein is Gamma-II crystallin of Rhizoprionodon acutus (Milk shark).